The sequence spans 907 residues: MFSKILTKVIGSRNDRTLRKLRKIVDQINKLEPQFESLQDEELKAKTIEFRARLEQGEDLDSLLPEAFATVREASKRLYGMRHFDVQMIGGMVLNDSQIAEMRTGEGKTLTATLPCYLNALTGKGVHVVTVNDYLAKRDAETNRELFEFLGMTVGVNVPNMPPQEKKQAYLCDILYGTNNEFGFDYLRDNMAFRAEDRVQRERYFAVVDEVDSILIDEARTPLIISGPAEDSSELYIRINTLIPQLVKQDEEDSEEYRGEGHYTLDEKGKQTHLTENGQEFVEQLLKDAGLMEEDDTLYSPANISLLHHINAALRAHVLFEKDVDYIVKDDEVIIVDEHTGRTMPGRRWSEGLHQAVEAKEGVKIQNENQTLASITFQNFFRLYDKLSGMTGTADTEAFEFQSIYGLDTVVIPTNRPMARNDMGDLVYMTEAEKFAAIIEDIKGCSERGQPVLVGTVSIEKSELLSNALKKAKIKHNVLNAKFHEQEADIVANAGTASAVTIATNMAGRGTDIVLGGSWQADVAKLSDPTEEQIQAVKAKWKEAHDAVLASGGLHIIGTERHESRRIDNQLRGRAGRQGDAGSSRFYLSMEDALMRIFASDRVSGMMKKLGMEEGEAIEHPWVTKAIENAQRKVEGRNFDIRKQLLEYDDVANDQRKVVYELRDELMNVDDISEMIGYNRQEVLEGLFGQYIPPQSLEEMWDVEGLTIRLRADFDLDLPLQEWLDNDDKLHEDNLREKIIEAAVQVYKEKEESVGESVLRNFEKAVMLQTLDGLWKEHLAAMDHLRQGIHLRGYAQKNPKQEYKRESFELFEGLLDTLKFDVVSILSKVRVQQQEDVERMEEQRRLQAEEAARRQQLQHQNAENQLDDGEGAEEAHSPMVREERKVGRNEPCPCGSGKKYKQCHGKI.

ATP contacts are provided by residues Q87, 105–109, and D512; that span reads GEGKT. The interval 834–907 is disordered; it reads QEDVERMEEQ…KKYKQCHGKI (74 aa). 2 stretches are compositionally biased toward basic and acidic residues: residues 836 to 853 and 873 to 888; these read DVER…EAAR and EEAH…KVGR. Zn(2+) is bound by residues C892, C894, C903, and H904. Residues 898-907 are compositionally biased toward basic residues; the sequence is KKYKQCHGKI.

Belongs to the SecA family. As to quaternary structure, monomer and homodimer. Part of the essential Sec protein translocation apparatus which comprises SecA, SecYEG and auxiliary proteins SecDF-YajC and YidC. The cofactor is Zn(2+).

The protein resides in the cell inner membrane. Its subcellular location is the cytoplasm. It carries out the reaction ATP + H2O + cellular proteinSide 1 = ADP + phosphate + cellular proteinSide 2.. Its function is as follows. Part of the Sec protein translocase complex. Interacts with the SecYEG preprotein conducting channel. Has a central role in coupling the hydrolysis of ATP to the transfer of proteins into and across the cell membrane, serving both as a receptor for the preprotein-SecB complex and as an ATP-driven molecular motor driving the stepwise translocation of polypeptide chains across the membrane. This chain is Protein translocase subunit SecA, found in Aliivibrio fischeri (strain ATCC 700601 / ES114) (Vibrio fischeri).